A 483-amino-acid chain; its full sequence is Arginine/agmatine antiporter (483 aa).

The next 12 helical transmembrane spans lie at 11–33 (ILGTLALTGIVISYMIGGGIFSL), 48–70 (LAWMLSGIGIFFIANTFKTLSII), 90–112 (VGFTIAWGYWLCQIFGNVGYAVI), 127–149 (GGNTIPAILLGSLLIWIFNYIVL), 156–178 (SFVNIIGVVCTLIPLLLFILITA), 209–228 (TMLVTLWAFIGIEGAVVISG), 241–263 (ILGFSGCLLIYVLLSLLPFGSLF), 293–315 (TGLLIAVLTSWLSWTILASEIPY), 335–357 (APSFSLFMTSGLMQITMLLVYFS), 367–389 (ITGVMVLPAYLTSSLFLVKFSLS), 415–435 (LWLIYAGGLQHLFMVAILLAL), and 458–477 (EILKMTIMALAALLAIFLFS).

This sequence belongs to the amino acid-polyamine-organocation (APC) superfamily. Basic amino acid/polyamine antiporter (APA) (TC 2.A.3.2) family.

The protein localises to the cell inner membrane. In terms of biological role, catalyzes the exchange of L-arginine for agmatine. The arginine uptake by the bacterium in the macrophage may be a virulence factor against the host innate immune response. This chain is Arginine/agmatine antiporter (aaxC), found in Chlamydia trachomatis serovar L2 (strain ATCC VR-902B / DSM 19102 / 434/Bu).